Reading from the N-terminus, the 108-residue chain is Large ribosomal subunit protein uL24 (108 aa).

It belongs to the universal ribosomal protein uL24 family. As to quaternary structure, part of the 50S ribosomal subunit.

One of two assembly initiator proteins, it binds directly to the 5'-end of the 23S rRNA, where it nucleates assembly of the 50S subunit. Functionally, one of the proteins that surrounds the polypeptide exit tunnel on the outside of the subunit. This chain is Large ribosomal subunit protein uL24, found in Mycoplasma genitalium (strain ATCC 33530 / DSM 19775 / NCTC 10195 / G37) (Mycoplasmoides genitalium).